The chain runs to 660 residues: Bifunctional polymyxin resistance protein ArnA (660 aa).

The segment at 1-304 (MKAVIFAYHD…TLGLVAGARL (304 aa)) is formyltransferase ArnAFT. The Proton donor; for formyltransferase activity role is filled by His-104. (6R)-10-formyltetrahydrofolate is bound by residues Arg-114 and 136-140 (VKRAD). The segment at 314-660 (RRIRVLILGV…RSVDIAERAS (347 aa)) is dehydrogenase ArnADH. Residues Asp-347 and 368 to 369 (DI) contribute to the NAD(+) site. UDP-alpha-D-glucuronate-binding positions include Ala-393, Tyr-398, and 432–433 (TS). Glu-434 acts as the Proton acceptor; for decarboxylase activity in catalysis. Residues Arg-460, Asn-492, 526 to 535 (KLIDGGQQKR), and Tyr-613 each bind UDP-alpha-D-glucuronate. Arg-619 serves as the catalytic Proton donor; for decarboxylase activity.

This sequence in the N-terminal section; belongs to the Fmt family. UDP-L-Ara4N formyltransferase subfamily. In the C-terminal section; belongs to the NAD(P)-dependent epimerase/dehydratase family. UDP-glucuronic acid decarboxylase subfamily. Homohexamer, formed by a dimer of trimers.

It catalyses the reaction UDP-alpha-D-glucuronate + NAD(+) = UDP-beta-L-threo-pentopyranos-4-ulose + CO2 + NADH. It carries out the reaction UDP-4-amino-4-deoxy-beta-L-arabinose + (6R)-10-formyltetrahydrofolate = UDP-4-deoxy-4-formamido-beta-L-arabinose + (6S)-5,6,7,8-tetrahydrofolate + H(+). It functions in the pathway nucleotide-sugar biosynthesis; UDP-4-deoxy-4-formamido-beta-L-arabinose biosynthesis; UDP-4-deoxy-4-formamido-beta-L-arabinose from UDP-alpha-D-glucuronate: step 1/3. Its pathway is nucleotide-sugar biosynthesis; UDP-4-deoxy-4-formamido-beta-L-arabinose biosynthesis; UDP-4-deoxy-4-formamido-beta-L-arabinose from UDP-alpha-D-glucuronate: step 3/3. It participates in bacterial outer membrane biogenesis; lipopolysaccharide biosynthesis. Its function is as follows. Bifunctional enzyme that catalyzes the oxidative decarboxylation of UDP-glucuronic acid (UDP-GlcUA) to UDP-4-keto-arabinose (UDP-Ara4O) and the addition of a formyl group to UDP-4-amino-4-deoxy-L-arabinose (UDP-L-Ara4N) to form UDP-L-4-formamido-arabinose (UDP-L-Ara4FN). The modified arabinose is attached to lipid A and is required for resistance to polymyxin and cationic antimicrobial peptides. In Salmonella schwarzengrund (strain CVM19633), this protein is Bifunctional polymyxin resistance protein ArnA.